The primary structure comprises 235 residues: MPSSAHLQDPPPHLSRTLTQDEEQTSLRQSSSCGPSTTSASASESLSGSTKSRISQKKLLEGMLPKIIPTESAAKLLCCYAVFMALTVVVIALSIALSVKKTPQISAVNTYAACQRNWIGFGNKCYYFNETARNWTFSQTLCKEQEAELARFDNEEELNFLKRYKGSSGYWIGLHRESSADPWKWTDNTAYNNLVPIKGEEKHGFLSDNGLSSGKDYIKRKSICSKLNSYTSQCP.

A disordered region spans residues 1–50 (MPSSAHLQDPPPHLSRTLTQDEEQTSLRQSSSCGPSTTSASASESLSGST). The Cytoplasmic portion of the chain corresponds to 1–75 (MPSSAHLQDP…KIIPTESAAK (75 aa)). The span at 30-50 (SSSCGPSTTSASASESLSGST) shows a compositional bias: low complexity. A helical; Signal-anchor for type II membrane protein transmembrane segment spans residues 76–96 (LLCCYAVFMALTVVVIALSIA). Over 97 to 235 (LSVKKTPQIS…KLNSYTSQCP (139 aa)) the chain is Extracellular. Residues 121–232 (FGNKCYYFNE…ICSKLNSYTS (112 aa)) form the C-type lectin domain. Asn-134 carries N-linked (GlcNAc...) asparagine glycosylation.

Its subcellular location is the cell membrane. In terms of biological role, lectin-type cell surface receptor. The protein is C-type lectin domain family 2 member D-related protein of Rattus norvegicus (Rat).